The primary structure comprises 306 residues: Glutathione transport system permease protein GsiC (306 aa).

The Cytoplasmic segment spans residues 1 to 8 (MLNYVLKR). Residues 9-29 (LLGLIPTLLIVAVLVFLFVHL) form a helical membrane-spanning segment. Residues 30 to 102 (LPGDPARLIA…SRFLPTLWLT (73 aa)) are Periplasmic-facing. The region spanning 95-292 (FLPTLWLTIT…LEFILINLVV (198 aa)) is the ABC transmembrane type-1 domain. Residues 103 to 123 (ITSMIWAVLFGMAIGIAAAVW) form a helical membrane-spanning segment. Topologically, residues 124–134 (RNRWPDRVGMT) are cytoplasmic. A helical transmembrane segment spans residues 135–155 (LAVTGISFPAFALGMLLMQIF). The Periplasmic portion of the chain corresponds to 156-168 (SVDLGWLPTVGAD). The helical transmembrane segment at 169–189 (SWQHYILPSLTLGAAVASVMA) threads the bilayer. Over 190–228 (RFTRSSFVDVLSEDYMRTARAKGVSETWVVLKHGLRNAM) the chain is Cytoplasmic. The chain crosses the membrane as a helical span at residues 229 to 249 (IPVVTMMGLQFGFLLGGSIVV). Residues 250-278 (EKVFNWPGLGRLLVDSVDMRDYPVIQAEV) lie on the Periplasmic side of the membrane. Residues 279-299 (LLFSLEFILINLVVDVLYAAI) form a helical membrane-spanning segment. Topologically, residues 300–306 (NPAIRYK) are cytoplasmic.

It belongs to the binding-protein-dependent transport system permease family. As to quaternary structure, the complex is composed of two ATP-binding proteins (GsiA), two transmembrane proteins (GsiC and GsiD) and a solute-binding protein (GsiB).

It localises to the cell inner membrane. Functionally, part of the ABC transporter complex GsiABCD involved in glutathione import. Probably responsible for the translocation of the substrate across the membrane. In Salmonella choleraesuis (strain SC-B67), this protein is Glutathione transport system permease protein GsiC.